Consider the following 121-residue polypeptide: Phosphoribosyl-ATP pyrophosphatase (121 aa).

Belongs to the PRA-PH family.

Its subcellular location is the cytoplasm. It catalyses the reaction 1-(5-phospho-beta-D-ribosyl)-ATP + H2O = 1-(5-phospho-beta-D-ribosyl)-5'-AMP + diphosphate + H(+). The protein operates within amino-acid biosynthesis; L-histidine biosynthesis; L-histidine from 5-phospho-alpha-D-ribose 1-diphosphate: step 2/9. In Burkholderia multivorans (strain ATCC 17616 / 249), this protein is Phosphoribosyl-ATP pyrophosphatase.